The sequence spans 369 residues: GDSL esterase/lipase At5g42170 (369 aa).

Positions 1–16 are cleaved as a signal peptide; sequence MSRLVYVIFLLVVVEG. N-linked (GlcNAc...) asparagine glycans are attached at residues Asn-28 and Asn-45. Ser-57 (nucleophile) is an active-site residue. Asn-203 and Asn-336 each carry an N-linked (GlcNAc...) asparagine glycan. Active-site residues include Asp-344 and His-347.

The protein belongs to the 'GDSL' lipolytic enzyme family.

It localises to the secreted. This Arabidopsis thaliana (Mouse-ear cress) protein is GDSL esterase/lipase At5g42170.